Reading from the N-terminus, the 339-residue chain is Ketol-acid reductoisomerase (NADP(+)) (339 aa).

A KARI N-terminal Rossmann domain is found at Met1–Thr182. NADP(+) contacts are provided by residues Tyr24–Gln27, Arg48, Ser51, Thr53, and Asp83–Gln86. The active site involves His108. Gly134 contributes to the NADP(+) binding site. The KARI C-terminal knotted domain occupies Ser183–Ile328. Mg(2+)-binding residues include Asp191, Glu195, Glu227, and Glu231. Ser252 is a substrate binding site.

The protein belongs to the ketol-acid reductoisomerase family. Mg(2+) is required as a cofactor.

It catalyses the reaction (2R)-2,3-dihydroxy-3-methylbutanoate + NADP(+) = (2S)-2-acetolactate + NADPH + H(+). The enzyme catalyses (2R,3R)-2,3-dihydroxy-3-methylpentanoate + NADP(+) = (S)-2-ethyl-2-hydroxy-3-oxobutanoate + NADPH + H(+). It functions in the pathway amino-acid biosynthesis; L-isoleucine biosynthesis; L-isoleucine from 2-oxobutanoate: step 2/4. Its pathway is amino-acid biosynthesis; L-valine biosynthesis; L-valine from pyruvate: step 2/4. Involved in the biosynthesis of branched-chain amino acids (BCAA). Catalyzes an alkyl-migration followed by a ketol-acid reduction of (S)-2-acetolactate (S2AL) to yield (R)-2,3-dihydroxy-isovalerate. In the isomerase reaction, S2AL is rearranged via a Mg-dependent methyl migration to produce 3-hydroxy-3-methyl-2-ketobutyrate (HMKB). In the reductase reaction, this 2-ketoacid undergoes a metal-dependent reduction by NADPH to yield (R)-2,3-dihydroxy-isovalerate. The chain is Ketol-acid reductoisomerase (NADP(+)) from Rhodopseudomonas palustris (strain HaA2).